Here is a 553-residue protein sequence, read N- to C-terminus: Cytokine-like nuclear factor N-PAC (553 aa).

The PWWP domain maps to 8-66; that stretch reads LGDLVWGKLGRYPPWPGKIVNPPKDLKKPRGKKCFFVKFFGTEDHAWIKVEQLKPYHAH. 2 stretches are compositionally biased toward basic and acidic residues: residues 92 to 145 and 162 to 182; these read RAKG…EGKK and RAQE…KDLS. The segment at 92 to 190 is disordered; that stretch reads RAKGKDQTSS…LSIPESSTVK (99 aa). The residue at position 130 (serine 130) is a Phosphoserine. Lysine 135 is covalently cross-linked (Glycyl lysine isopeptide (Lys-Gly) (interchain with G-Cter in SUMO2)). Serine 167 carries the phosphoserine modification. The a.T hook DNA-binding region spans 168-180; sequence PRKRGRPPKDEKD. Residues lysine 176, lysine 179, lysine 201, and lysine 211 each participate in a glycyl lysine isopeptide (Lys-Gly) (interchain with G-Cter in SUMO2) cross-link. The tract at residues 214-217 is interaction with histone H3; that stretch reads DPHF. The tract at residues 216–225 is interaction with KDM1B; sequence HFHHFLLSQT. Residues lysine 227, lysine 237, lysine 240, and lysine 269 each participate in a glycyl lysine isopeptide (Lys-Gly) (interchain with G-Cter in SUMO2) cross-link. The interval 261–553 is dehydrogenase domain; the sequence is GSVTPTDKKI…MSAVYRAYIH (293 aa). 271–285 contributes to the NAD(+) binding site; sequence GFLGLGLMGSGIVSN. Lysine 302 is covalently cross-linked (Glycyl lysine isopeptide (Lys-Gly) (interchain with G-Cter in SUMO2)). 2 residues coordinate NAD(+): threonine 362 and lysine 505. Serine 540 bears the Phosphoserine mark.

Belongs to the HIBADH-related family. NP60 subfamily. In terms of assembly, homotetramere. Interacts with MAPK14. Interacts with KDM1B at nucleosomes; this interaction stimulates H3K4me1 and H3K4me2 demethylation. Binds to mononucleosomes. Interacts with GATA4; the interaction is required for a synergistic activation of GATA4 target genes transcription.

It is found in the nucleus. Its subcellular location is the chromosome. Its function is as follows. Cytokine-like nuclear factor with chromatin gene reader activity involved in chromatin modification and regulation of gene expression. Acts as a nucleosome-destabilizing factor that is recruited to genes during transcriptional activation. Recognizes and binds histone H3 without a preference for specific epigenetic markers and also binds DNA. Interacts with KDM1B and promotes its histone demethylase activity by facilitating the capture of H3 tails, they form a multifunctional enzyme complex that modifies transcribed chromatin and facilitates Pol II transcription through nucleosomes. Stimulates the acetylation of 'Lys-56' of nucleosomal histone H3 (H3K56ac) by EP300. With GATA4, co-binds a defined set of heart development genes and coregulates their expression during cardiomyocyte differentiation. Regulates p38 MAP kinase activity by mediating stress activation of MAPK14/p38alpha and specifically regulating MAPK14 signaling. Indirectly promotes phosphorylation of MAPK14 and activation of ATF2. The phosphorylation of MAPK14 requires upstream activity of MAP2K4 and MAP2K6. The protein is Cytokine-like nuclear factor N-PAC (GLYR1) of Bos taurus (Bovine).